Reading from the N-terminus, the 338-residue chain is Glyceraldehyde-3-phosphate dehydrogenase (338 aa).

Residues 12–13 (RI), Asp-38, and Ser-125 contribute to the NAD(+) site. D-glyceraldehyde 3-phosphate-binding positions include 155–157 (SCT), Thr-186, 216–217 (TG), and Arg-239. The Nucleophile role is filled by Cys-156. An NAD(+)-binding site is contributed by Asn-320.

This sequence belongs to the glyceraldehyde-3-phosphate dehydrogenase family. As to quaternary structure, homotetramer.

It is found in the cytoplasm. It carries out the reaction D-glyceraldehyde 3-phosphate + phosphate + NAD(+) = (2R)-3-phospho-glyceroyl phosphate + NADH + H(+). It functions in the pathway carbohydrate degradation; glycolysis; pyruvate from D-glyceraldehyde 3-phosphate: step 1/5. In terms of biological role, catalyzes the oxidative phosphorylation of glyceraldehyde 3-phosphate (G3P) to 1,3-bisphosphoglycerate (BPG) using the cofactor NAD. The first reaction step involves the formation of a hemiacetal intermediate between G3P and a cysteine residue, and this hemiacetal intermediate is then oxidized to a thioester, with concomitant reduction of NAD to NADH. The reduced NADH is then exchanged with the second NAD, and the thioester is attacked by a nucleophilic inorganic phosphate to produce BPG. The polypeptide is Glyceraldehyde-3-phosphate dehydrogenase (gap) (Lactobacillus delbrueckii subsp. bulgaricus).